The chain runs to 119 residues: NAD(P)H-quinone oxidoreductase subunit M (119 aa).

This sequence belongs to the complex I NdhM subunit family. In terms of assembly, NDH-1 can be composed of about 15 different subunits; different subcomplexes with different compositions have been identified which probably have different functions.

The protein localises to the cell inner membrane. The enzyme catalyses a plastoquinone + NADH + (n+1) H(+)(in) = a plastoquinol + NAD(+) + n H(+)(out). The catalysed reaction is a plastoquinone + NADPH + (n+1) H(+)(in) = a plastoquinol + NADP(+) + n H(+)(out). Functionally, NDH-1 shuttles electrons from an unknown electron donor, via FMN and iron-sulfur (Fe-S) centers, to quinones in the respiratory and/or the photosynthetic chain. The immediate electron acceptor for the enzyme in this species is believed to be plastoquinone. Couples the redox reaction to proton translocation, and thus conserves the redox energy in a proton gradient. Cyanobacterial NDH-1 also plays a role in inorganic carbon-concentration. This is NAD(P)H-quinone oxidoreductase subunit M from Gloeobacter violaceus (strain ATCC 29082 / PCC 7421).